Here is a 222-residue protein sequence, read N- to C-terminus: Small ribosomal subunit protein uS3 (222 aa).

A KH type-2 domain is found at 39–108; sequence IRKFIKKELF…NVLINIVEVK (70 aa).

This sequence belongs to the universal ribosomal protein uS3 family. Part of the 30S ribosomal subunit. Forms a tight complex with proteins S10 and S14.

Its function is as follows. Binds the lower part of the 30S subunit head. Binds mRNA in the 70S ribosome, positioning it for translation. This Clostridium perfringens (strain ATCC 13124 / DSM 756 / JCM 1290 / NCIMB 6125 / NCTC 8237 / Type A) protein is Small ribosomal subunit protein uS3.